The chain runs to 390 residues: NADH-quinone oxidoreductase subunit H (390 aa).

Helical transmembrane passes span 4–24, 78–98, 120–140, 157–177, 191–211, 247–266, 278–298, 315–337, and 341–360; these read WLLTLLITVVKAVAVILALLT, LVYTLAPIIAIGMALTAFGGI, VLALLALTSMGVYGIFLGGWA, MISYELGMGLSILGLLMLVGS, GWMILFQSLGFALFLISSFAE, YVNMITASALMSTLFFGGWR, IADIPILWLVVKIGFFLFVFI, FGWKLLLPLALFNTMLVAGYIAF, and WGWWPLALLSLLGLTALLAL.

It belongs to the complex I subunit 1 family. In terms of assembly, NDH-1 is composed of 15 different subunits. Subunits NuoA, H, J, K, L, M, N constitute the membrane sector of the complex.

The protein localises to the cell membrane. It catalyses the reaction a quinone + NADH + 5 H(+)(in) = a quinol + NAD(+) + 4 H(+)(out). Its function is as follows. NDH-1 shuttles electrons from NADH, via FMN and iron-sulfur (Fe-S) centers, to quinones in the respiratory chain. The immediate electron acceptor for the enzyme in this species is believed to be ubiquinone. Couples the redox reaction to proton translocation (for every two electrons transferred, four hydrogen ions are translocated across the cytoplasmic membrane), and thus conserves the redox energy in a proton gradient. This subunit may bind ubiquinone. In Deinococcus deserti (strain DSM 17065 / CIP 109153 / LMG 22923 / VCD115), this protein is NADH-quinone oxidoreductase subunit H.